A 365-amino-acid polypeptide reads, in one-letter code: MAVMPPRTLLLLLSGALALTQTWAGSHSMRYFFTSVSRPGRGEPRFIAVGYVDDTQFVRFDSDAASQRMEPRAPWIEQEGPEYWDEETRSAKAHSQTDRVDLGTLRGYYNQSEDGSHTIQIMYGCDVGSDGRFLRGYRQDAYDGKDYIALNEDLRSWTAADMAAQITKRKWEAAHAAEQRRAYLEGTCVEWLRRYLENGKETLQRTDPPKTHMTHHPISDHEATLRCWALGFYPAEITLTWQRDGEDQTQDTELVETRPAGDGTFQKWAAVVVPSGEEQRYTCHVQHEGLPKPLTLRWEPSSQPTIPIVGIIAGLVLLGAVITGAVVAAVMWRRKSSDRKGGSYTQAASSDSAQGSDVSLTACKV.

Residues 1–24 form the signal peptide; sequence MAVMPPRTLLLLLSGALALTQTWA. Positions 25–114 are alpha-1; the sequence is GSHSMRYFFT…LRGYYNQSED (90 aa). The Extracellular segment spans residues 25–308; sequence GSHSMRYFFT…EPSSQPTIPI (284 aa). N-linked (GlcNAc...) asparagine glycosylation is present at Asn-110. Residues 115–206 form an alpha-2 region; that stretch reads GSHTIQIMYG…ENGKETLQRT (92 aa). Intrachain disulfides connect Cys-125–Cys-188 and Cys-227–Cys-283. The tract at residues 207–298 is alpha-3; sequence DPPKTHMTHH…GLPKPLTLRW (92 aa). In terms of domain architecture, Ig-like C1-type spans 209–295; sequence PKTHMTHHPI…QHEGLPKPLT (87 aa). The tract at residues 299 to 308 is connecting peptide; sequence EPSSQPTIPI. A helical transmembrane segment spans residues 309 to 332; the sequence is VGIIAGLVLLGAVITGAVVAAVMW. At 333–365 the chain is on the cytoplasmic side; sequence RRKSSDRKGGSYTQAASSDSAQGSDVSLTACKV. Residues 339 to 360 are disordered; that stretch reads RKGGSYTQAASSDSAQGSDVSL. Ser-343 carries the post-translational modification Phosphoserine. Tyr-344 bears the Phosphotyrosine mark. Over residues 346–359 the composition is skewed to low complexity; sequence QAASSDSAQGSDVS. Ser-349, Ser-350, Ser-352, Ser-356, and Ser-359 each carry phosphoserine.

This sequence belongs to the MHC class I family. Heterodimer of an alpha chain and a beta chain (beta-2-microglobulin).

Its subcellular location is the membrane. Functionally, involved in the presentation of foreign antigens to the immune system. The sequence is that of Patr class I histocompatibility antigen, A-2 alpha chain from Pan troglodytes (Chimpanzee).